Reading from the N-terminus, the 170-residue chain is Acetyl-CoA decarbonylase/synthase complex subunit epsilon 1 (170 aa).

Belongs to the CdhB family. In terms of assembly, heterotetramer of two alpha and two epsilon subunits. The ACDS complex is made up of alpha, epsilon, beta, gamma and delta subunits with a probable stoichiometry of (alpha(2)epsilon(2))(4)-beta(8)-(gamma(1)delta(1))(8).

It functions in the pathway one-carbon metabolism; methanogenesis from acetate. Functionally, part of a complex that catalyzes the reversible cleavage of acetyl-CoA, allowing growth on acetate as sole source of carbon and energy. The alpha-epsilon subcomponent functions as a carbon monoxide dehydrogenase. The precise role of the epsilon subunit is unclear; it may have a stabilizing role within the alpha(2)epsilon(2) component and/or be involved in electron transfer to FAD during a potential FAD-mediated CO oxidation. In Methanosarcina thermophila, this protein is Acetyl-CoA decarbonylase/synthase complex subunit epsilon 1 (cdhB1).